Reading from the N-terminus, the 2742-residue chain is Polycystin-1-like protein 1 (2742 aa).

Topologically, residues 1 to 1602 (MFCLWIFSLA…LDQFLSVSRD (1602 aa)) are extracellular. 5 N-linked (GlcNAc...) asparagine glycosylation sites follow: asparagine 35, asparagine 133, asparagine 149, asparagine 220, and asparagine 267. 2 PKD domains span residues 286 to 372 (AVRI…VKLN) and 370 to 454 (KLNR…PCQP). Asparagine 383, asparagine 397, asparagine 486, asparagine 545, asparagine 693, asparagine 709, and asparagine 735 each carry an N-linked (GlcNAc...) asparagine glycan. One can recognise an REJ domain in the interval 452–1338 (CQPPPVKNLG…ITFFLPASLI (887 aa)). Disordered regions lie at residues 767-829 (SPSR…QSDP) and 846-908 (DLRG…RPSV). The segment covering 779-799 (SELTDSPVSSVTVGFSGSESF) has biased composition (polar residues). Residues 880–893 (SFPSDSDSFSHSSS) are compositionally biased toward low complexity. N-linked (GlcNAc...) asparagine glycans are attached at residues asparagine 1080, asparagine 1101, asparagine 1201, asparagine 1318, asparagine 1437, asparagine 1490, and asparagine 1568. One can recognise a GAIN-B domain in the interval 1436-1587 (HNFSITQEHL…KVLQQQIQSS (152 aa)). Intrachain disulfides connect cysteine 1541–cysteine 1569 and cysteine 1556–cysteine 1571. The segment at 1541–1587 (CLSWEDQQGSWTQNGCRAQTNDKTSAVNCSCHHLKPLKVLQQQIQSS) is GPS. A helical membrane pass occupies residues 1603–1623 (LTVVFVLLLCVSLNIPVLVWC). Residues 1624 to 1812 (KKTDATSEEN…SPHLFTRAQR (189 aa)) are Cytoplasmic-facing. The 122-residue stretch at 1648 to 1769 (HFYAVTVHTG…GDGQVERMLR (122 aa)) folds into the PLAT domain. The chain crosses the membrane as a helical span at residues 1813–1833 (LCVCLLLFLGYACVNIIITHQ). At 1834–1851 (RDDQLPFDLGVIDVTSVS) the chain is on the extracellular side. The helical transmembrane segment at 1852–1872 (IATGLVSVVAVLPVAMVISFL) threads the bilayer. Over 1873–2005 (FRVKSGRMTL…YRLASLLYHC (133 aa)) the chain is Cytoplasmic. A helical transmembrane segment spans residues 2006–2026 (VAWTLCLLFCLSCLILSAVLG). The Extracellular portion of the chain corresponds to 2027 to 2040 (TRLNSGKILHWIHS). A helical membrane pass occupies residues 2041–2061 (LFVSLTFCFFVIHPATILVLA). Residues 2062–2151 (AVVSWRFKRS…KQAVIHKMLR (90 aa)) lie on the Cytoplasmic side of the membrane. The helical transmembrane segment at 2152 to 2172 (DLCLCGSMFFLMVCITYGSPV) threads the bilayer. The Extracellular segment spans residues 2173–2344 (DEHYPLNAAF…QSVRLYHSPS (172 aa)). The N-linked (GlcNAc...) asparagine glycan is linked to asparagine 2218. A helical transmembrane segment spans residues 2345–2365 (MLDYTVMVWQLLFLLLSLVNL). Residues 2366–2378 (YHQTSTAAQHGLM) lie on the Cytoplasmic side of the membrane. Residues 2379–2401 (GYWKTTSISVEVSLVIVSLVYYV) form a helical membrane-spanning segment. The Extracellular portion of the chain corresponds to 2402–2442 (HYVYHPTMVMEVAEQLRRNHREHVDVSTLANSEQFSRTLRG). The helical transmembrane segment at 2443 to 2463 (IILFLLAVKCVTVVRLNRILA) threads the bilayer. The Cytoplasmic portion of the chain corresponds to 2464-2467 (PSMP). Residues 2468-2488 (LLSLSSLLWPAISGLLLLSIF) traverse the membrane as a helical segment. At 2489-2528 (SCMGRLLYIERTFHSIQTVLWHFWSLRKSRDLISLWRDFY) the chain is on the extracellular side. The helical transmembrane segment at 2529–2549 (YFGLLYASSAMLTTMVFAVMI) threads the bilayer. Residues 2550–2742 (RKAKRSPSTK…LVHHEQGTKN (193 aa)) are Cytoplasmic-facing.

It belongs to the polycystin family. Heterodimer. Interacts with pkd2 to form a calcium channel. Interacts with pkd2l1 to form ciliary calcium channel. Expressed in Kupffer's vesicle, an organ equivalent to the node.

It localises to the cell projection. The protein localises to the cilium membrane. Functionally, component of a calcium-permeant ion channel formed by PKD1L2 and PKD1L1 in primary cilia, where it controls cilium calcium concentration, without affecting cytoplasmic calcium concentration, and regulates sonic hedgehog/SHH signaling and GLI2 transcription. The PKD1L1:PKD2L1 channel complex is mechanosensitive only at high pressures and is highly temperature sensitive. Also involved in left/right axis specification downstream of nodal flow by forming a complex with PKD2 in cilia to facilitate flow detection in left/right patterning. The chain is Polycystin-1-like protein 1 from Oryzias latipes (Japanese rice fish).